Consider the following 365-residue polypeptide: 3-isopropylmalate dehydrogenase (365 aa).

78–91 (GPKWDTLPAEERPE) lines the NAD(+) pocket. Residues R99, R109, R138, and D227 each coordinate substrate. Mg(2+) is bound by residues D227, D251, and D255. NAD(+) is bound at residue 285–297 (GSAPDIAGKNIAN).

This sequence belongs to the isocitrate and isopropylmalate dehydrogenases family. LeuB type 1 subfamily. Homodimer. It depends on Mg(2+) as a cofactor. The cofactor is Mn(2+).

It localises to the cytoplasm. It catalyses the reaction (2R,3S)-3-isopropylmalate + NAD(+) = 4-methyl-2-oxopentanoate + CO2 + NADH. Its pathway is amino-acid biosynthesis; L-leucine biosynthesis; L-leucine from 3-methyl-2-oxobutanoate: step 3/4. Functionally, catalyzes the oxidation of 3-carboxy-2-hydroxy-4-methylpentanoate (3-isopropylmalate) to 3-carboxy-4-methyl-2-oxopentanoate. The product decarboxylates to 4-methyl-2 oxopentanoate. This chain is 3-isopropylmalate dehydrogenase, found in Syntrophotalea carbinolica (strain DSM 2380 / NBRC 103641 / GraBd1) (Pelobacter carbinolicus).